The primary structure comprises 320 residues: Cytochrome f (320 aa).

Residues 1–35 (MQNRNTFLGVKEQITRSIFVSIMIYVITRASISNA) form the signal peptide. The heme site is built by Y36, C56, C59, and H60. The chain crosses the membrane as a helical span at residues 286 to 306 (IQGLLFFLASVILAQIFLVLK).

The protein belongs to the cytochrome f family. In terms of assembly, the 4 large subunits of the cytochrome b6-f complex are cytochrome b6, subunit IV (17 kDa polypeptide, petD), cytochrome f and the Rieske protein, while the 4 small subunits are PetG, PetL, PetM and PetN. The complex functions as a dimer. The cofactor is heme.

Its subcellular location is the plastid. It is found in the chloroplast thylakoid membrane. Component of the cytochrome b6-f complex, which mediates electron transfer between photosystem II (PSII) and photosystem I (PSI), cyclic electron flow around PSI, and state transitions. The chain is Cytochrome f from Dioscorea elephantipes (Elephant's foot yam).